Consider the following 437-residue polypeptide: Diaminopimelate decarboxylase (437 aa).

The residue at position 81 (K81) is an N6-(pyridoxal phosphate)lysine. Pyridoxal 5'-phosphate is bound by residues G256 and 298–301; that span reads EPGR. Substrate contacts are provided by R301, R337, and Y341. Catalysis depends on C366, which acts as the Proton donor. Residues E367 and Y396 each contribute to the substrate site. Y396 serves as a coordination point for pyridoxal 5'-phosphate.

The protein belongs to the Orn/Lys/Arg decarboxylase class-II family. LysA subfamily. In terms of assembly, homodimer. Pyridoxal 5'-phosphate serves as cofactor.

It carries out the reaction meso-2,6-diaminopimelate + H(+) = L-lysine + CO2. It functions in the pathway amino-acid biosynthesis; L-lysine biosynthesis via DAP pathway; L-lysine from DL-2,6-diaminopimelate: step 1/1. Its function is as follows. Specifically catalyzes the decarboxylation of meso-diaminopimelate (meso-DAP) to L-lysine. The sequence is that of Diaminopimelate decarboxylase from Actinosynnema pretiosum subsp. auranticum.